A 622-amino-acid chain; its full sequence is 1-deoxy-D-xylulose-5-phosphate synthase (622 aa).

Thiamine diphosphate is bound by residues His-71 and 112 to 114 (GHS). Asp-143 is a Mg(2+) binding site. Residues 144–145 (GA), Asn-172, Tyr-283, and Glu-363 each bind thiamine diphosphate. Asn-172 serves as a coordination point for Mg(2+).

Belongs to the transketolase family. DXPS subfamily. In terms of assembly, homodimer. The cofactor is Mg(2+). Thiamine diphosphate is required as a cofactor.

It catalyses the reaction D-glyceraldehyde 3-phosphate + pyruvate + H(+) = 1-deoxy-D-xylulose 5-phosphate + CO2. It participates in metabolic intermediate biosynthesis; 1-deoxy-D-xylulose 5-phosphate biosynthesis; 1-deoxy-D-xylulose 5-phosphate from D-glyceraldehyde 3-phosphate and pyruvate: step 1/1. Functionally, catalyzes the acyloin condensation reaction between C atoms 2 and 3 of pyruvate and glyceraldehyde 3-phosphate to yield 1-deoxy-D-xylulose-5-phosphate (DXP). The polypeptide is 1-deoxy-D-xylulose-5-phosphate synthase (Caldanaerobacter subterraneus subsp. tengcongensis (strain DSM 15242 / JCM 11007 / NBRC 100824 / MB4) (Thermoanaerobacter tengcongensis)).